A 1206-amino-acid chain; its full sequence is Methionine synthase (1206 aa).

Positions 1 to 314 (MRVTAANQHQ…DHIREVAAAV (314 aa)) constitute a Hcy-binding domain. Zn(2+)-binding residues include Cys233, Cys299, and Cys300. In terms of domain architecture, Pterin-binding spans 350–609 (VLMIGERTNA…IPEEQRQAAL (260 aa)). Positions 642-735 (REAELAKLPL…HMEKSDCDFG (94 aa)) constitute a B12-binding N-terminal domain. The region spanning 740 to 877 (KGRIVLATVK…SAKRGEALAP (138 aa)) is the B12-binding domain. Residues 750–754 (GDVHD), His753, Ser798, and Ala856 contribute to the methylcob(III)alamin site. Residues 873–925 (EALAPGSPESLAAEADRNKETERKARHERSKRIAVQRKAAEEPVEVPERSDVP) form a disordered region. A compositionally biased stretch (basic and acidic residues) spans 886–897 (EADRNKETERKA). Basic residues predominate over residues 898-907 (RHERSKRIAV). The region spanning 907–1206 (VQRKAAEEPV…HHPAAKYFNV (300 aa)) is the AdoMet activation domain. Positions 910–924 (KAAEEPVEVPERSDV) are enriched in basic and acidic residues. Residues Asp954, Arg1149, and 1203–1204 (YF) each bind S-adenosyl-L-methionine.

Belongs to the vitamin-B12 dependent methionine synthase family. Requires methylcob(III)alamin as cofactor. Zn(2+) is required as a cofactor.

The catalysed reaction is (6S)-5-methyl-5,6,7,8-tetrahydrofolate + L-homocysteine = (6S)-5,6,7,8-tetrahydrofolate + L-methionine. It participates in amino-acid biosynthesis; L-methionine biosynthesis via de novo pathway; L-methionine from L-homocysteine (MetH route): step 1/1. Its function is as follows. Catalyzes the transfer of a methyl group from methyl-cobalamin to homocysteine, yielding enzyme-bound cob(I)alamin and methionine. Subsequently, remethylates the cofactor using methyltetrahydrofolate. This is Methionine synthase (metH) from Mycobacterium leprae (strain TN).